We begin with the raw amino-acid sequence, 87 residues long: ParB-like nuclease domain-containing protein YnaK (87 aa).

This chain is ParB-like nuclease domain-containing protein YnaK (ynaK), found in Escherichia coli (strain K12).